We begin with the raw amino-acid sequence, 287 residues long: Acetyl-coenzyme A carboxylase carboxyl transferase subunit beta (287 aa).

Positions 33–287 (LFSKCPGCKH…TLLAFHGGQA (255 aa)) constitute a CoA carboxyltransferase N-terminal domain. Zn(2+) contacts are provided by C37, C40, C55, and C58. The segment at 37–58 (CPGCKHTIYQKDLGNDSVCPNC) adopts a C4-type zinc-finger fold.

It belongs to the AccD/PCCB family. Acetyl-CoA carboxylase is a heterohexamer composed of biotin carboxyl carrier protein (AccB), biotin carboxylase (AccC) and two subunits each of ACCase subunit alpha (AccA) and ACCase subunit beta (AccD). Zn(2+) serves as cofactor.

Its subcellular location is the cytoplasm. The enzyme catalyses N(6)-carboxybiotinyl-L-lysyl-[protein] + acetyl-CoA = N(6)-biotinyl-L-lysyl-[protein] + malonyl-CoA. It participates in lipid metabolism; malonyl-CoA biosynthesis; malonyl-CoA from acetyl-CoA: step 1/1. Component of the acetyl coenzyme A carboxylase (ACC) complex. Biotin carboxylase (BC) catalyzes the carboxylation of biotin on its carrier protein (BCCP) and then the CO(2) group is transferred by the transcarboxylase to acetyl-CoA to form malonyl-CoA. This Streptococcus sanguinis (strain SK36) protein is Acetyl-coenzyme A carboxylase carboxyl transferase subunit beta.